The chain runs to 318 residues: Mitochondrial thiamine pyrophosphate carrier (318 aa).

3 Solcar repeats span residues 13 to 106, 116 to 202, and 214 to 309; these read NSKL…LTEL, HQFS…LKRA, and TGNL…FCNL. 6 helical membrane passes run 19-39, 87-107, 122-142, 173-193, 220-240, and 293-313; these read AVAGSVSGFVTRALISPLDVI, ILSIGYGAVQFLAFEELTELL, FVCGGLSAGTATLTVHPVDVL, VFYKGLTPTVIAIFPYAGLQF, LLCGCGSGVISKTLTYPLDLF, and ALSTGFMFFWYELFCNLFHCI.

It belongs to the mitochondrial carrier (TC 2.A.29) family.

It localises to the mitochondrion membrane. It catalyses the reaction thiamine phosphate(out) + thiamine diphosphate(in) = thiamine phosphate(in) + thiamine diphosphate(out). Its function is as follows. Mitochondrial transporter mediating uptake of thiamine diphosphate into mitochondria. It is not clear if the antiporter activity is affected by the membrane potential or by the proton electrochemical gradient. This Rattus norvegicus (Rat) protein is Mitochondrial thiamine pyrophosphate carrier (Slc25a19).